A 288-amino-acid polypeptide reads, in one-letter code: Polyisoprenoid diphosphate/phosphate phosphohydrolase PLPP6 (288 aa).

The interval 1–82 (MPSPKARSGS…STGGGGQQLP (82 aa)) is disordered. Topologically, residues 1–127 (MPSPKARSGS…EDSSWGSVRP (127 aa)) are cytoplasmic. A helical membrane pass occupies residues 128–148 (LMKLIEVSGHGIPWLAGAAYC). Over 149–161 (LYKSDSPAGQEVM) the chain is Lumenal. Residues 162 to 182 (LNLLMALVLDVVLVGVLKAVV) traverse the membrane as a helical segment. The interval 179 to 187 (KAVVRRRRP) is phosphatase sequence motif I. At 183–223 (RRRRPAHNRMDMFATFSVDSYSFPSGHATRAAMCARFLLNH) the chain is on the cytoplasmic side. A phosphatase sequence motif II region spans residues 206-209 (PSGH). Residue H209 is the Proton donors of the active site. A helical membrane pass occupies residues 224 to 244 (LVLAAPLRVLVLLWATIVGFS). Positions 244–255 (SRVLLGRHNVTD) are phosphatase sequence motif III. The Lumenal portion of the chain corresponds to 245 to 255 (RVLLGRHNVTD). Residue H251 is the Nucleophile of the active site. A helical membrane pass occupies residues 256–276 (VAFGFFMGYWQYNLVEMLWLS). Over 277–288 (PVMLQSAIGQLH) the chain is Cytoplasmic.

The protein belongs to the PA-phosphatase related phosphoesterase family.

The protein localises to the endoplasmic reticulum membrane. Its subcellular location is the nucleus envelope. It is found in the nucleus inner membrane. The enzyme catalyses presqualene diphosphate + H2O = presqualene phosphate + phosphate + H(+). The catalysed reaction is presqualene phosphate + H2O = presqualene alcohol + phosphate. It carries out the reaction (2E,6E)-farnesyl diphosphate + H2O = (2E,6E)-farnesyl phosphate + phosphate + H(+). It catalyses the reaction (2E,6E)-farnesyl phosphate + H2O = (2E,6E)-farnesol + phosphate. The enzyme catalyses (2E,6E,10E)-geranylgeranyl diphosphate + H2O = (2E,6E,10E)-geranylgeranyl phosphate + phosphate + H(+). The catalysed reaction is (2E,6E,10E)-geranylgeranyl phosphate + H2O = (2E,6E,10E)-geranylgeraniol + phosphate. It carries out the reaction (2E)-geranyl diphosphate + H2O = (2E)-geranyl phosphate + phosphate + H(+). It catalyses the reaction (2E)-geranyl phosphate + H2O = (2E)-geraniol + phosphate. The enzyme catalyses 1,2-dihexadecanoyl-sn-glycero-3-phosphate + H2O = 1,2-dihexadecanoyl-sn-glycerol + phosphate. Functionally, magnesium-independent polyisoprenoid diphosphatase that catalyzes the sequential dephosphorylation of presqualene, farnesyl, geranyl and geranylgeranyl diphosphates. May regulate the biosynthesis of cholesterol and related sterols by dephosphorylating presqualene and farnesyl diphosphate, two key intermediates in this biosynthetic pathway. May also play a role in protein prenylation by acting on farnesyl diphosphate and its derivative geranylgeranyl diphosphate, two precursors for the addition of isoprenoid anchors to membrane proteins. Has a lower activity towards phosphatidic acid (PA), but through phosphatidic acid dephosphorylation may participate in the biosynthesis of phospholipids and triacylglycerols. May also act on ceramide-1-P, lysophosphatidic acid (LPA) and sphing-4-enine 1-phosphate/sphingosine-1-phosphate. The sequence is that of Polyisoprenoid diphosphate/phosphate phosphohydrolase PLPP6 (plpp6) from Danio rerio (Zebrafish).